The chain runs to 301 residues: Glycine--tRNA ligase alpha subunit (301 aa).

Belongs to the class-II aminoacyl-tRNA synthetase family. In terms of assembly, tetramer of two alpha and two beta subunits.

The protein resides in the cytoplasm. The catalysed reaction is tRNA(Gly) + glycine + ATP = glycyl-tRNA(Gly) + AMP + diphosphate. The protein is Glycine--tRNA ligase alpha subunit of Proteus mirabilis (strain HI4320).